Reading from the N-terminus, the 507-residue chain is Transcription factor CP2 (507 aa).

The Grh/CP2 DB domain occupies 61–300 (ENKILPFQYV…SPGFNSSHNS (240 aa)). The DNA-binding stretch occupies residues 133-395 (EHQQLEGWRW…LFNALKGRMV (263 aa)). 2 disordered regions span residues 240-268 (PKGA…YQPS) and 296-316 (SSHN…QPEP). Positions 241–265 (KGADRKQKTDREKMEKRTPQEKEKY) are enriched in basic and acidic residues.

It belongs to the grh/CP2 family. CP2 subfamily. Component of the SSP (stage selector protein) complex, which appears to be a heteromer of TFCP2 and 2 copies of NFE4.

The protein localises to the nucleus. Its function is as follows. May function as a transcription factor. The chain is Transcription factor CP2 (tfcp2) from Xenopus tropicalis (Western clawed frog).